We begin with the raw amino-acid sequence, 640 residues long: Glutamyl-tRNA(Gln) amidotransferase subunit E (640 aa).

It belongs to the GatB/GatE family. GatE subfamily. As to quaternary structure, heterodimer of GatD and GatE.

It carries out the reaction L-glutamyl-tRNA(Gln) + L-glutamine + ATP + H2O = L-glutaminyl-tRNA(Gln) + L-glutamate + ADP + phosphate + H(+). Functionally, allows the formation of correctly charged Gln-tRNA(Gln) through the transamidation of misacylated Glu-tRNA(Gln) in organisms which lack glutaminyl-tRNA synthetase. The reaction takes place in the presence of glutamine and ATP through an activated gamma-phospho-Glu-tRNA(Gln). The GatDE system is specific for glutamate and does not act on aspartate. In Methanopyrus kandleri (strain AV19 / DSM 6324 / JCM 9639 / NBRC 100938), this protein is Glutamyl-tRNA(Gln) amidotransferase subunit E.